The chain runs to 1356 residues: Vegetative incompatibility protein HET-E-1 (1356 aa).

An NACHT domain is found at 294–629 (RLLWINGDPG…DFLLGTASDK (336 aa)). 300–307 (GDPGKGKT) serves as a coordination point for GTP. WD repeat units lie at residues 839–869 (GHGSSVLSVAFSADGQRVASGSDDKTIKIWD), 881–911 (GHGGSVWSVAFSPDRERVASGSDDKTIKIWD), 923–953 (GHGGRVQSVAFSPDGQRVASGSDDHTIKIWD), 965–995 (GHGSSVLSVAFSPDGQRVASGSGDKTIKIWD), 1007–1037 (GHGGSVWSVAFSPDGQRVASGSDDKTIKIWD), 1049–1079 (GHGGWVQSVVFSPDGQRVASGSDDHTIKIWD), 1091–1121 (GHGDSVWSVAFSPDGQRVASGSIDGTIKIWD), 1133–1163 (GHGGWVHSVAFSPDGQRVASGSIDGTIKIWD), 1175–1205 (GHGGWVQSVAFSPDGQRVASGSSDKTIKIWD), and 1217–1247 (GHGGWVQSVAFSPDGQRVASGSSDNTIKIWD).

Functionally, responsible for vegetative incompatibility through specific interactions with different alleles of the unlinked gene, het-c. This chain is Vegetative incompatibility protein HET-E-1 (HET-E1), found in Podospora anserina (Pleurage anserina).